A 340-amino-acid chain; its full sequence is MGSINPPQILDIRRSKFEESIPKQVEAGLLSSPKTLPALLFYSTEGIQHWNRYSHASDFYPRHEEIQILKDKATDMAASIADGSVVVDLGSASLDKVIHLLEALEAAQKKVTYYALDLSFSELTSTLQAIPTDQFVHVQFSALHGTFDDGLQWLKETLVIRDQPHCLLLFGLTIGNFSRPNAAKFLHNIASHALVESPSQSSILLTLDSCKVPTKVIRAYTAEGVVPFALESLKYGNTLFQQDAGENVFDPEDWYFLSEWNYVLGRHEASLVPRSKDIKLGRPLDKIVVGKHEKVRFGCSYKYDSEERKELFGTAGLRDVKSWSKEGCDVAFYQLKCCPN.

The protein belongs to the methyltransferase superfamily. Homodimer.

It catalyses the reaction 4-(3-methylbut-2-enyl)-L-tryptophan + S-adenosyl-L-methionine = 4-(3-methylbut-2-enyl)-L-abrine + S-adenosyl-L-homocysteine + H(+). It functions in the pathway alkaloid biosynthesis; ergot alkaloid biosynthesis. 4-dimethylallyltryptophan N-methyltransferase; part of the gene cluster that mediates the biosynthesis of fungal ergot alkaloid. DmaW catalyzes the first step of ergot alkaloid biosynthesis by condensing dimethylallyl diphosphate (DMAP) and tryptophan to form 4-dimethylallyl-L-tryptophan. The second step is catalyzed by the methyltransferase easF that methylates 4-dimethylallyl-L-tryptophan in the presence of S-adenosyl-L-methionine, resulting in the formation of 4-dimethylallyl-L-abrine. The catalase easC and the FAD-dependent oxidoreductase easE then transform 4-dimethylallyl-L-abrine to chanoclavine-I which is further oxidized by easD in the presence of NAD(+), resulting in the formation of chanoclavine-I aldehyde. Chanoclavine-I aldehyde is the precursor of ergoamides and ergopeptines in Clavicipitaceae, and clavine-type alcaloids such as fumiclavine in Trichocomaceae. However, the metabolites downstream of chanoclavine-I aldehyde in Arthrodermataceae have not been identified yet. The chain is 4-dimethylallyltryptophan N-methyltransferase easF from Trichophyton verrucosum (strain HKI 0517).